The primary structure comprises 288 residues: 33 kDa chaperonin (288 aa).

2 disulfide bridges follow: C236-C238 and C269-C272.

It belongs to the HSP33 family. Post-translationally, under oxidizing conditions two disulfide bonds are formed involving the reactive cysteines. Under reducing conditions zinc is bound to the reactive cysteines and the protein is inactive.

Its subcellular location is the cytoplasm. Functionally, redox regulated molecular chaperone. Protects both thermally unfolding and oxidatively damaged proteins from irreversible aggregation. Plays an important role in the bacterial defense system toward oxidative stress. The polypeptide is 33 kDa chaperonin (Lactococcus lactis subsp. lactis (strain IL1403) (Streptococcus lactis)).